Consider the following 380-residue polypeptide: Alcohol dehydrogenase 3 (380 aa).

8 residues coordinate Zn(2+): cysteine 48, threonine 50, histidine 70, cysteine 100, cysteine 103, cysteine 106, cysteine 114, and cysteine 178. Residues threonine 50 and histidine 70 each coordinate an alcohol. Threonine 50 lines the NAD(+) pocket. Residues 203–208, aspartate 227, arginine 232, threonine 273, valine 296, 296–298, phenylalanine 323, and arginine 373 each bind NAD(+); these read GLGAVG and VGV.

The protein belongs to the zinc-containing alcohol dehydrogenase family. As to quaternary structure, homodimer. Homotetramer. Zn(2+) serves as cofactor.

The protein resides in the cytoplasm. It catalyses the reaction a primary alcohol + NAD(+) = an aldehyde + NADH + H(+). The enzyme catalyses a secondary alcohol + NAD(+) = a ketone + NADH + H(+). This Solanum tuberosum (Potato) protein is Alcohol dehydrogenase 3 (ADH3).